The following is a 308-amino-acid chain: Transmembrane and ubiquitin-like domain-containing protein 1 (308 aa).

The chain crosses the membrane as a helical span at residues 11 to 31; the sequence is VTVLFALVLFFMVLMLAWVST. A disordered region spans residues 39–162; that stretch reads THWIRPEPAQ…GLGDGTTAQS (124 aa). Polar residues predominate over residues 63-93; that stretch reads PSQTLTNADPNSETVDSSDSTQSSREFQNAG. Residues 103–115 are compositionally biased toward low complexity; sequence SSSGSTVSTGGSV. Residues 132-149 show a composition bias toward polar residues; sequence PNFTVSSRDPQAGASSSL. Residues 169-242 form the Ubiquitin-like domain; it reads IHLRLKFLND…LHCHISQHAS (74 aa). Helical transmembrane passes span 253-273 and 283-303; these read VPLN…MLLW and FTGT…AIAF.

Its subcellular location is the membrane. It localises to the cytoplasm. The protein localises to the nucleus. In terms of biological role, may contribute to the regulation of translation during cell-cycle progression. May contribute to the regulation of cell proliferation. The membrane form is involved in sterol-regulated ubiquitination and degradation of HMG-CoA reductase HMGCR. May be involved in centrosome assembly. The protein is Transmembrane and ubiquitin-like domain-containing protein 1 (tmub1) of Xenopus laevis (African clawed frog).